A 197-amino-acid chain; its full sequence is UPF0319 protein VP0761 (197 aa).

A signal peptide spans M1–A20.

It belongs to the UPF0319 family.

The chain is UPF0319 protein VP0761 from Vibrio parahaemolyticus serotype O3:K6 (strain RIMD 2210633).